A 397-amino-acid polypeptide reads, in one-letter code: GTPase Obg (397 aa).

The 159-residue stretch at 1-159 folds into the Obg domain; the sequence is MKFVDEATII…RNLRLELKVL (159 aa). The disordered stretch occupies residues 128–148; the sequence is TRFKSSVNRAPRQTSKGSEGE. Positions 129-144 are enriched in polar residues; the sequence is RFKSSVNRAPRQTSKG. Residues 160 to 333 form the OBG-type G domain; sequence ADVGLLGLPN…LVQAVMRWIE (174 aa). GTP-binding positions include 166 to 173, 191 to 195, 213 to 216, 283 to 286, and 314 to 316; these read GLPNAGKS, FTTLV, DIPG, NKVD, and SAL. Mg(2+) is bound by residues serine 173 and threonine 193. The segment covering 336 to 347 has biased composition (acidic residues); it reads AEQEADNPDFAE. The disordered stretch occupies residues 336–397; the sequence is AEQEADNPDF…YDVEVVYAPE (62 aa). A compositionally biased stretch (basic and acidic residues) spans 349 to 370; sequence EAARRRRMDEEARQKIEADRQA. Over residues 378–390 the composition is skewed to acidic residues; the sequence is DDDDDFDDDDYDV.

The protein belongs to the TRAFAC class OBG-HflX-like GTPase superfamily. OBG GTPase family. Monomer. Mg(2+) is required as a cofactor.

It localises to the cytoplasm. Functionally, an essential GTPase which binds GTP, GDP and possibly (p)ppGpp with moderate affinity, with high nucleotide exchange rates and a fairly low GTP hydrolysis rate. Plays a role in control of the cell cycle, stress response, ribosome biogenesis and in those bacteria that undergo differentiation, in morphogenesis control. This is GTPase Obg from Marinobacter nauticus (strain ATCC 700491 / DSM 11845 / VT8) (Marinobacter aquaeolei).